The sequence spans 429 residues: Phosphoribosylamine--glycine ligase (429 aa).

The region spanning 109-316 (KDFLARHHIP…LVELCLAACD (208 aa)) is the ATP-grasp domain. 135-196 (LREKGAPIVV…EEFLDGEEAS (62 aa)) contributes to the ATP binding site. Residues 209 to 231 (MATSQDHKRVGENDTGLNTGGMG) are disordered. Residues Glu-286 and Asn-288 each contribute to the Mg(2+) site.

Belongs to the GARS family. It depends on Mg(2+) as a cofactor. Mn(2+) serves as cofactor.

It carries out the reaction 5-phospho-beta-D-ribosylamine + glycine + ATP = N(1)-(5-phospho-beta-D-ribosyl)glycinamide + ADP + phosphate + H(+). It participates in purine metabolism; IMP biosynthesis via de novo pathway; N(1)-(5-phospho-D-ribosyl)glycinamide from 5-phospho-alpha-D-ribose 1-diphosphate: step 2/2. This is Phosphoribosylamine--glycine ligase from Pasteurella multocida (strain Pm70).